The chain runs to 1407 residues: DNA-directed RNA polymerase subunit beta' (1407 aa).

4 residues coordinate Zn(2+): C70, C72, C85, and C88. Mg(2+) is bound by residues D460, D462, and D464. Zn(2+) is bound by residues C814, C888, C895, and C898. Residue K972 is modified to N6-acetyllysine.

Belongs to the RNA polymerase beta' chain family. In terms of assembly, the RNAP catalytic core consists of 2 alpha, 1 beta, 1 beta' and 1 omega subunit. When a sigma factor is associated with the core the holoenzyme is formed, which can initiate transcription. The cofactor is Mg(2+). It depends on Zn(2+) as a cofactor.

It carries out the reaction RNA(n) + a ribonucleoside 5'-triphosphate = RNA(n+1) + diphosphate. Its function is as follows. DNA-dependent RNA polymerase catalyzes the transcription of DNA into RNA using the four ribonucleoside triphosphates as substrates. The chain is DNA-directed RNA polymerase subunit beta' from Escherichia coli O6:H1 (strain CFT073 / ATCC 700928 / UPEC).